The chain runs to 235 residues: UPF0758 protein Swol_1642 (235 aa).

Positions 109–235 (IIKSPEDVQE…YCSLKARGLI (127 aa)) constitute an MPN domain. Residues His-184, His-186, and Asp-197 each coordinate Zn(2+). The JAMM motif signature appears at 184 to 197 (HNHPSGDPTPSQED).

It belongs to the UPF0758 family.

This Syntrophomonas wolfei subsp. wolfei (strain DSM 2245B / Goettingen) protein is UPF0758 protein Swol_1642.